The sequence spans 672 residues: MDDFQKAAARARELHRELAHHNYRYYVLDSPEVSDAQYDKLMRELQDLEAKHPSLQTPDSPTQRVGGAAAEEFGEVVHRAPMISLANIFEDQGLTEFDERIRKLVGLPGIAYVCEPKLDGLAIALRYEKGAFVQGATRGDGTTGEDVTSNLRTIRSLPMSLFPQDDVKVPDVLEVRGEVFIRKKDFQKLNEKREEEGEPLFANPRNAAAGSLRQLDPRMTAARPLSVFLYECVPGEGVPVFKTHIEKLEYLKTLGLPINQYRRAEGLEGVRQAYDASLKGRHELPFEVDGMVVKVDDEDQRKRLGQVSKSPRWAVAYKFPPEEESTEVMDIGIQVGRTGALTPVAHLKPVKVGGVTVARATLHNEDELRRKDVRKGDTVFVRRAGDVIPEIVSVVLSKRPADSAPFEFPKHCPVCDAVATKDEDGAIIRCTGASCPAQLVEKIRHFASRLAMDIEGLGDKLAAQLVSTGRVKAFADLYALTKEDLLTLERMGDKSADNLIASLERSKQTTQRRFLYSLGIRHVGDATAKALAEAFPRSEMLFEASLEDISRVKDVGPIMAQVIHTFFQEPQNQEAIRALLAAGVQPAAPQVATGGPFVGKSVVLTGAMTGMTREQAKEEVERRGGKVAGSVSRKTDFVVAGEDAGSKLKKAQELGVRILDEQAFLQMLQTNA.

NAD(+) is bound by residues 35-39 (DAQYD), 84-85 (SL), and Glu115. Lys117 acts as the N6-AMP-lysine intermediate in catalysis. The NAD(+) site is built by Arg138, Glu178, Lys294, and Lys318. Residues Cys412, Cys415, Cys430, and Cys435 each contribute to the Zn(2+) site. One can recognise a BRCT domain in the interval 592–672 (ATGGPFVGKS…AFLQMLQTNA (81 aa)).

The protein belongs to the NAD-dependent DNA ligase family. LigA subfamily. It depends on Mg(2+) as a cofactor. The cofactor is Mn(2+).

It carries out the reaction NAD(+) + (deoxyribonucleotide)n-3'-hydroxyl + 5'-phospho-(deoxyribonucleotide)m = (deoxyribonucleotide)n+m + AMP + beta-nicotinamide D-nucleotide.. Its function is as follows. DNA ligase that catalyzes the formation of phosphodiester linkages between 5'-phosphoryl and 3'-hydroxyl groups in double-stranded DNA using NAD as a coenzyme and as the energy source for the reaction. It is essential for DNA replication and repair of damaged DNA. This chain is DNA ligase, found in Myxococcus xanthus (strain DK1622).